Reading from the N-terminus, the 632-residue chain is 1-deoxy-D-xylulose-5-phosphate synthase (632 aa).

A disordered region spans residues 1–25 (MPTTFHEIPRKRPTTPLLDRANTPD). Thiamine diphosphate-binding positions include histidine 87 and 128-130 (GHS). Aspartate 159 serves as a coordination point for Mg(2+). Residues 160-161 (GA), asparagine 188, phenylalanine 295, and glutamate 378 contribute to the thiamine diphosphate site. Asparagine 188 is a binding site for Mg(2+).

This sequence belongs to the transketolase family. DXPS subfamily. Homodimer. Requires Mg(2+) as cofactor. Thiamine diphosphate serves as cofactor.

It carries out the reaction D-glyceraldehyde 3-phosphate + pyruvate + H(+) = 1-deoxy-D-xylulose 5-phosphate + CO2. The protein operates within metabolic intermediate biosynthesis; 1-deoxy-D-xylulose 5-phosphate biosynthesis; 1-deoxy-D-xylulose 5-phosphate from D-glyceraldehyde 3-phosphate and pyruvate: step 1/1. Its function is as follows. Catalyzes the acyloin condensation reaction between C atoms 2 and 3 of pyruvate and glyceraldehyde 3-phosphate to yield 1-deoxy-D-xylulose-5-phosphate (DXP). The polypeptide is 1-deoxy-D-xylulose-5-phosphate synthase (Pseudomonas fluorescens (strain Pf0-1)).